Here is a 280-residue protein sequence, read N- to C-terminus: DNA repair protein XRCC2 (280 aa).

At Ser-10 the chain carries Phosphoserine.

The protein belongs to the RecA family. RAD51 subfamily. As to quaternary structure, interacts with RAD51D. Part of the BCDX2 complex consisting of RAD51B, RAD51C, RAD51D and XRCC2; the complex has a ring-like structure arranged into a flat disk around a central channel. In the absence of DNA, the BCDX2 subcomplex XRCC2:RAD51D formed a multimeric ring structure; in the presence of single-stranded DNA it formed a filamentous structure with the ssDNA.

The protein resides in the nucleus. Its subcellular location is the cytoplasm. The protein localises to the cytoskeleton. It localises to the microtubule organizing center. It is found in the centrosome. Involved in the homologous recombination repair (HRR) pathway of double-stranded DNA, thought to repair chromosomal fragmentation, translocations and deletions. Part of the RAD51 paralog protein complex BCDX2 which acts in the BRCA1-BRCA2-dependent HR pathway. Upon DNA damage, BCDX2 acts downstream of BRCA2 recruitment and upstream of RAD51 recruitment. BCDX2 binds predominantly to the intersection of the four duplex arms of the Holliday junction and to junction of replication forks. The BCDX2 complex was originally reported to bind single-stranded DNA, single-stranded gaps in duplex DNA and specifically to nicks in duplex DNA. The polypeptide is DNA repair protein XRCC2 (XRCC2) (Homo sapiens (Human)).